Here is a 350-residue protein sequence, read N- to C-terminus: Histidinol-phosphate aminotransferase (350 aa).

N6-(pyridoxal phosphate)lysine is present on Lys209.

It belongs to the class-II pyridoxal-phosphate-dependent aminotransferase family. Histidinol-phosphate aminotransferase subfamily. Homodimer. Pyridoxal 5'-phosphate is required as a cofactor.

It catalyses the reaction L-histidinol phosphate + 2-oxoglutarate = 3-(imidazol-4-yl)-2-oxopropyl phosphate + L-glutamate. The protein operates within amino-acid biosynthesis; L-histidine biosynthesis; L-histidine from 5-phospho-alpha-D-ribose 1-diphosphate: step 7/9. The chain is Histidinol-phosphate aminotransferase from Geobacter sp. (strain M21).